Consider the following 279-residue polypeptide: Protein BASIC PENTACYSTEINE2 (279 aa).

The segment at 126-167 (TKKRKTNAKAGSTPKAKKPRKPKDENSNNNNNNNTNVTRVKP) is disordered. A compositionally biased stretch (low complexity) spans 152–161 (SNNNNNNNTN).

Belongs to the BBR/BPC family. In terms of tissue distribution, expressed in seedlings, leaves and pistils. Detected in the base of flowers and tips of carpels, in sepal and petal vasculature, in pollen grains, in young rosette, in the lateral and tip of primary roots, and in ovule at the exception of the outer integument.

Its subcellular location is the nucleus. Its function is as follows. Transcriptional regulator that specifically binds to GA-rich elements (GAGA-repeats) present in regulatory sequences of genes involved in developmental processes. This is Protein BASIC PENTACYSTEINE2 from Arabidopsis thaliana (Mouse-ear cress).